The following is a 385-amino-acid chain: Probable caffeine synthase 3 (385 aa).

Residues Y18, C62, N67, D101, L102, S140, and F141 each contribute to the S-adenosyl-L-homocysteine site. The caffeine site is built by Y158, Q161, and F162. Mg(2+) is bound at residue N179. A caffeine-binding site is contributed by T238. Residues D261, F263, and N264 each contribute to the Mg(2+) site. Y369 serves as a coordination point for caffeine.

The protein belongs to the methyltransferase superfamily. Type-7 methyltransferase family. Mg(2+) serves as cofactor. Expressed in roots, stems, young and old leaves.

It participates in alkaloid biosynthesis. Functionally, may be involved in the biosynthesis of caffeine. The protein is Probable caffeine synthase 3 of Coffea arabica (Arabian coffee).